Here is a 67-residue protein sequence, read N- to C-terminus: DNA-directed RNA polymerase subunit omega (67 aa).

This sequence belongs to the RNA polymerase subunit omega family. As to quaternary structure, the RNAP catalytic core consists of 2 alpha, 1 beta, 1 beta' and 1 omega subunit. When a sigma factor is associated with the core the holoenzyme is formed, which can initiate transcription.

The catalysed reaction is RNA(n) + a ribonucleoside 5'-triphosphate = RNA(n+1) + diphosphate. Functionally, promotes RNA polymerase assembly. Latches the N- and C-terminal regions of the beta' subunit thereby facilitating its interaction with the beta and alpha subunits. This Ralstonia nicotianae (strain ATCC BAA-1114 / GMI1000) (Ralstonia solanacearum) protein is DNA-directed RNA polymerase subunit omega.